The primary structure comprises 205 residues: SREBP regulating gene protein (205 aa).

The Cytoplasmic portion of the chain corresponds to 1-16 (MLNLAALLWRRLLRKR). The chain crosses the membrane as a helical span at residues 17-35 (WVLALVFGLSLVYFLSSTF). At 36–205 (KQEERAVRDR…GESPPELFPA (170 aa)) the chain is on the lumenal side. N-linked (GlcNAc...) asparagine glycosylation is present at Asn-67.

Belongs to the SPRING family. In terms of assembly, interacts with SCAP. As to expression, ubiquitously expressed with a slightly higher expression in the liver and kidney.

The protein resides in the golgi apparatus membrane. In terms of biological role, positively regulates hepatic SREBP signaling pathway by modulating the proper localization of SCAP (SREBP cleavage-activating protein) to the endoplasmic reticulum, thereby controlling the level of functional SCAP. Plays a crucial role during embryogenesis. The protein is SREBP regulating gene protein (Spring1) of Mus musculus (Mouse).